The sequence spans 187 residues: Probable chemoreceptor glutamine deamidase CheD (187 aa).

The tract at residues 164-187 (APQDVRRPTPPPMPAVASGDVDLF) is disordered.

This sequence belongs to the CheD family.

The enzyme catalyses L-glutaminyl-[protein] + H2O = L-glutamyl-[protein] + NH4(+). Its function is as follows. Probably deamidates glutamine residues to glutamate on methyl-accepting chemotaxis receptors (MCPs), playing an important role in chemotaxis. The polypeptide is Probable chemoreceptor glutamine deamidase CheD (Caulobacter vibrioides (strain ATCC 19089 / CIP 103742 / CB 15) (Caulobacter crescentus)).